The sequence spans 276 residues: Eukaryotic translation initiation factor 3 subunit G-2 (276 aa).

The region spanning 196-274 (SAVRISNLSE…LILCVEWSKP (79 aa)) is the RRM domain.

The protein belongs to the eIF-3 subunit G family. Component of the eukaryotic translation initiation factor 3 (eIF-3) complex. The eIF-3 complex interacts with pix.

Its subcellular location is the cytoplasm. RNA-binding component of the eukaryotic translation initiation factor 3 (eIF-3) complex, which is involved in protein synthesis of a specialized repertoire of mRNAs and, together with other initiation factors, stimulates binding of mRNA and methionyl-tRNAi to the 40S ribosome. The eIF-3 complex specifically targets and initiates translation of a subset of mRNAs involved in cell proliferation. This subunit can bind 18S rRNA. The sequence is that of Eukaryotic translation initiation factor 3 subunit G-2 from Drosophila persimilis (Fruit fly).